A 321-amino-acid polypeptide reads, in one-letter code: Cytochrome f (321 aa).

The signal sequence occupies residues 1–37; that stretch reads MKIYRQIKQSFSITKIVFSFFISLLLNLVAQPTICQA. Phe-38, Cys-58, Cys-61, and His-62 together coordinate heme. Residues 287–306 traverse the membrane as a helical segment; that stretch reads VQGLIAFFISVVLAQIFLVL.

Belongs to the cytochrome f family. The 4 large subunits of the cytochrome b6-f complex are cytochrome b6, subunit IV (17 kDa polypeptide, petD), cytochrome f and the Rieske protein, while the 4 small subunits are PetG, PetL, PetM and PetN. The complex functions as a dimer. It depends on heme as a cofactor.

It localises to the plastid. The protein localises to the cyanelle thylakoid membrane. In terms of biological role, component of the cytochrome b6-f complex, which mediates electron transfer between photosystem II (PSII) and photosystem I (PSI), cyclic electron flow around PSI, and state transitions. This Cyanophora paradoxa protein is Cytochrome f (petA).